Here is a 1171-residue protein sequence, read N- to C-terminus: ATP-dependent helicase/deoxyribonuclease subunit B (1171 aa).

In terms of domain architecture, UvrD-like helicase ATP-binding spans 1 to 390 (MSLRFVIGRA…HPLVECIRSA (390 aa)). 8-15 (GRAGSGKS) is a binding site for ATP. Residues 281–587 (MEQPRFHSPA…QFANIPPSLD (307 aa)) enclose the UvrD-like helicase C-terminal domain. 4 residues coordinate [4Fe-4S] cluster: C805, C1129, C1132, and C1138.

It belongs to the helicase family. AddB/RexB type 1 subfamily. As to quaternary structure, heterodimer of AddA and AddB. It depends on Mg(2+) as a cofactor. [4Fe-4S] cluster serves as cofactor.

The heterodimer acts as both an ATP-dependent DNA helicase and an ATP-dependent, dual-direction single-stranded exonuclease. Recognizes the chi site generating a DNA molecule suitable for the initiation of homologous recombination. The AddB subunit has 5' -&gt; 3' nuclease activity but not helicase activity. The chain is ATP-dependent helicase/deoxyribonuclease subunit B from Bacillus cereus (strain ZK / E33L).